A 122-amino-acid chain; its full sequence is Large ribosomal subunit protein uL14c (122 aa).

The protein belongs to the universal ribosomal protein uL14 family. In terms of assembly, part of the 50S ribosomal subunit.

The protein localises to the plastid. It is found in the chloroplast. Binds to 23S rRNA. The sequence is that of Large ribosomal subunit protein uL14c from Coffea arabica (Arabian coffee).